A 113-amino-acid chain; its full sequence is Protein NATD1 (113 aa).

The segment covering 1 to 16 has biased composition (low complexity); it reads MAQSPAAASPGAPEQG. The interval 1 to 20 is disordered; the sequence is MAQSPAAASPGAPEQGCPIR. One can recognise an N-acetyltransferase domain in the interval 22 to 112; that stretch reads EHDRRRRQFT…PLPQYLERLQ (91 aa).

This sequence belongs to the NATD1 family.

In Bos taurus (Bovine), this protein is Protein NATD1 (NATD1).